Reading from the N-terminus, the 405-residue chain is Cytoplasmic tRNA 2-thiolation protein 2 (405 aa).

Belongs to the CTU2/NCS2 family.

It is found in the cytoplasm. It participates in tRNA modification; 5-methoxycarbonylmethyl-2-thiouridine-tRNA biosynthesis. Its function is as follows. Plays a central role in 2-thiolation of mcm(5)S(2)U at tRNA wobble positions of tRNA(Lys), tRNA(Glu) and tRNA(Gln). May act by forming a heterodimer with NCS6/CTU1 that ligates sulfur from thiocarboxylated URM1 onto the uridine of tRNAs at wobble position. This Drosophila melanogaster (Fruit fly) protein is Cytoplasmic tRNA 2-thiolation protein 2.